Reading from the N-terminus, the 341-residue chain is LIM and senescent cell antigen-like-containing domain protein 2 (341 aa).

5 LIM zinc-binding domains span residues 13–74 (AVCQ…LFAP), 76–133 (CGSC…EKAK), 138–195 (YICQ…KMGV), 196–255 (PICG…LFGD), and 256–315 (VCYN…FPLE). Phenylalanine 22 carries the post-translational modification Phosphoserine. At threonine 327 the chain carries Phosphothreonine. A Phosphoserine modification is found at serine 328.

Interacts with TGFB1I1. Interacts with integrin-linked protein kinase 1 (ILK) via the first LIM domain, and in competition with LIMS1. Part of the heterotrimeric IPP complex composed of integrin-linked kinase (ILK), LIMS1 or LIMS2, and PARVA.

Its subcellular location is the nucleus. It localises to the cell junction. The protein localises to the focal adhesion. The protein resides in the cell membrane. Its function is as follows. Adapter protein in a cytoplasmic complex linking beta-integrins to the actin cytoskeleton, bridges the complex to cell surface receptor tyrosine kinases and growth factor receptors. Plays a role in modulating cell spreading and migration. This Homo sapiens (Human) protein is LIM and senescent cell antigen-like-containing domain protein 2 (LIMS2).